The primary structure comprises 492 residues: MEPEAPDSRKRPLETPPEVVCTKRSNTGEEGEYFLKVLIPSYAAGSIIGKGGQTIVQLQKETGATIKLSKSKDFYPGTTERVCLVQGTAEALNAVHSFIAEKVREIPQAMTKPEVVNILQPQTTMNPDRAKQAKLIVPNSTAGLIIGKGGATVKAVMEQSGAWVQLSQKPEGINLQERVVTVSGEPEQVHKAVSAIVQKVQEDPQSSSCLNISYANVAGPVANSNPTGSPYASPADVLPAAAAASAAAASGLLGPAGLAGVGAFPAALPAFSGTDLLAISTALNTLASYGYNTNSLGLGLNSAAASGVLAAVAAGANPAAAAAANLLASYAGEAGAGPAGGAAPPPPPPPGALGSFALAAAANGYLGAGAGGGAGGGGGPLVAAAAAAGAAGGFLTAEKLAAESAKELVEIAVPENLVGAILGKGGKTLVEYQELTGARIQISKKGEFLPGTRNRRVTITGSPAATQAAQYLISQRVTYEQGVRASNPQKVG.

The Bipartite nuclear localization signal signature appears at 10-26; it reads KRPLETPPEVVCTKRSN. The region spanning 32–99 is the KH 1 domain; sequence EYFLKVLIPS…EALNAVHSFI (68 aa). Lys-112 is covalently cross-linked (Glycyl lysine isopeptide (Lys-Gly) (interchain with G-Cter in SUMO2)). KH domains follow at residues 130–196 and 406–473; these read AKQA…VSAI and KELV…QYLI.

In terms of assembly, interacts with PTBP2; the interaction is direct. In terms of tissue distribution, brain. Expression restricted to astrocytes.

The protein resides in the nucleus. Functionally, functions to regulate alternative splicing in neurons by binding pre-mRNA in a sequence-specific manner to activate exon inclusion or exclusion. It binds specifically to the sequences 5'-YCAY-3' and regulates splicing in only a subset of regulated exons. Binding to an exonic 5'-YCAY-3' cluster changes the protein complexes assembled on pre-mRNA, blocking U1 snRNP binding and exon inclusion, whereas binding to an intronic 5'-YCAY-3' cluster enhances spliceosome assembly and exon inclusion. With NOVA1, they perform unique biological functions in different brain areas and cell types. Uniquely regulates alternative splicing events of a series of axon guidance related genes during cortical development, being essential for central nervous system development by regulating neural networks wiring. Regulates differentially alternative splicing on the same transcripts expressed in different neurons. This includes functional differences in transcripts expressed in cortical and cerebellar excitatory versus inhibitory neurons where is required for, respectively, development of laminar structure and motor coordination and synapse formation. Also the regulation the regulation of intron retention can sequester the trans-acting splicing factor PTBP2, acting as a variable cis-acting scaffolding platform for PTBP2 across various natural conditions. The sequence is that of RNA-binding protein Nova-2 from Homo sapiens (Human).